The primary structure comprises 396 residues: 1-deoxy-D-xylulose 5-phosphate reductoisomerase (396 aa).

Positions 15, 16, 17, 18, 41, and 129 each coordinate NADPH. Lys130 is a binding site for 1-deoxy-D-xylulose 5-phosphate. Glu131 contributes to the NADPH binding site. Asp155 is a binding site for Mn(2+). Residues Ser156, Glu157, Ser182, and His205 each contribute to the 1-deoxy-D-xylulose 5-phosphate site. Position 157 (Glu157) interacts with Mn(2+). Position 211 (Gly211) interacts with NADPH. 1-deoxy-D-xylulose 5-phosphate is bound by residues Ser218, Asn223, Lys224, and Glu227. Glu227 is a Mn(2+) binding site.

This sequence belongs to the DXR family. Requires Mg(2+) as cofactor. The cofactor is Mn(2+).

It catalyses the reaction 2-C-methyl-D-erythritol 4-phosphate + NADP(+) = 1-deoxy-D-xylulose 5-phosphate + NADPH + H(+). Its pathway is isoprenoid biosynthesis; isopentenyl diphosphate biosynthesis via DXP pathway; isopentenyl diphosphate from 1-deoxy-D-xylulose 5-phosphate: step 1/6. Functionally, catalyzes the NADPH-dependent rearrangement and reduction of 1-deoxy-D-xylulose-5-phosphate (DXP) to 2-C-methyl-D-erythritol 4-phosphate (MEP). The sequence is that of 1-deoxy-D-xylulose 5-phosphate reductoisomerase from Xanthomonas euvesicatoria pv. vesicatoria (strain 85-10) (Xanthomonas campestris pv. vesicatoria).